A 444-amino-acid chain; its full sequence is 23S rRNA (uracil(1939)-C(5))-methyltransferase RlmD (444 aa).

One can recognise a TRAM domain in the interval 5 to 64 (KPKLNLTSQTARIVNLSHDGRGIARVNGKATFIQGALPGEVVEFQYTRIKKDFDEGKLLS). Residues C77, C83, C86, and C166 each contribute to the [4Fe-4S] cluster site. Q276, F305, N310, E326, N353, and D374 together coordinate S-adenosyl-L-methionine. The active-site Nucleophile is C400.

This sequence belongs to the class I-like SAM-binding methyltransferase superfamily. RNA M5U methyltransferase family. RlmD subfamily.

It catalyses the reaction uridine(1939) in 23S rRNA + S-adenosyl-L-methionine = 5-methyluridine(1939) in 23S rRNA + S-adenosyl-L-homocysteine + H(+). Its function is as follows. Catalyzes the formation of 5-methyl-uridine at position 1939 (m5U1939) in 23S rRNA. In Legionella pneumophila (strain Corby), this protein is 23S rRNA (uracil(1939)-C(5))-methyltransferase RlmD.